Reading from the N-terminus, the 147-residue chain is Hemoglobin subunit beta (147 aa).

N-acetylvaline is present on valine 2. The region spanning 3 to 147 (HLADDEKAAV…VSTALAHKYH (145 aa)) is the Globin domain. Serine 45 is subject to Phosphoserine. Position 60 is an N6-acetyllysine (lysine 60). A heme b-binding site is contributed by histidine 64. Position 83 is an N6-acetyllysine (lysine 83). Histidine 93 contacts heme b. The residue at position 94 (cysteine 94) is an S-nitrosocysteine. At lysine 145 the chain carries N6-acetyllysine.

It belongs to the globin family. In terms of assembly, heterotetramer of two alpha chains and two beta chains. As to expression, red blood cells.

Involved in oxygen transport from the lung to the various peripheral tissues. The protein is Hemoglobin subunit beta (HBB) of Bradypus tridactylus (Pale-throated three-toed sloth).